Reading from the N-terminus, the 214-residue chain is Protein DEHYDRATION-INDUCED 19 homolog 5 (214 aa).

S110 bears the Phosphoserine mark. Residues P148–S185 form a disordered region. Residues P156–D166 show a composition bias toward polar residues. Positions S168–E179 are enriched in basic and acidic residues.

This sequence belongs to the Di19 family. Post-translationally, phosphorylated in vitro by CPK3 or CPK11. In terms of tissue distribution, expressed in seedlings, roots, leaves, stems, flowers and siliques.

The protein resides in the nucleus. This is Protein DEHYDRATION-INDUCED 19 homolog 5 (DI19-5) from Arabidopsis thaliana (Mouse-ear cress).